The chain runs to 659 residues: Enzymatic polyprotein (659 aa).

Residues 1 to 180 are protease; the sequence is MSLRNRTNPN…FLEEGGNHVD (180 aa). Residue Asp-34 is part of the active site. The 185-residue stretch at 252–436 folds into the Reverse transcriptase domain; it reads LELKVIKPSK…EKINFLGLEI (185 aa).

Belongs to the caulimoviridae enzymatic polyprotein family.

The catalysed reaction is DNA(n) + a 2'-deoxyribonucleoside 5'-triphosphate = DNA(n+1) + diphosphate. Encodes for at least two polypeptides: protease (PR) and reverse transcriptase (RT). The protease processes the polyprotein in cis. Reverse transcriptase is multifunctional enzyme that converts the viral RNA genome into dsDNA in viral cytoplasmic capsids. This enzyme displays a DNA polymerase activity that can copy either DNA or RNA templates, and a ribonuclease H (RNase H) activity that cleaves the RNA strand of RNA-DNA heteroduplexes in a partially processive 3'- to 5'-endonucleasic mode. Neo-synthesized pregenomic RNA (pgRNA) are encapsidated, and reverse-transcribed inside the nucleocapsid. Partial (+)DNA is synthesized from the (-)DNA template and generates the relaxed circular DNA (RC-DNA) genome. After budding and infection, the RC-DNA migrates in the nucleus, and is converted into a plasmid-like covalently closed circular DNA (cccDNA). This is Enzymatic polyprotein from Dianthus caryophyllus (Carnation).